We begin with the raw amino-acid sequence, 184 residues long: Transcription termination/antitermination protein NusG (184 aa).

The protein belongs to the NusG family.

In terms of biological role, participates in transcription elongation, termination and antitermination. This Borreliella burgdorferi (strain ATCC 35210 / DSM 4680 / CIP 102532 / B31) (Borrelia burgdorferi) protein is Transcription termination/antitermination protein NusG.